The sequence spans 365 residues: MANGSVDMVVEAALQKQEKDRRLLRIWLRVVLFTLFCLVLVGGATRLTESGLSITEWKPIHGAIPPLSVAEWEEEFQLYKRIPQYQEINKGMSLDEFKTIFWWEWAHRLLARTIGLVFALPLAFFWLTGRVEKRLRLPLVGLLALGGFQGFVGWWMVSSGLVNRTDVSQYRLATHLTIACLIFAGCMWILRGLSHHSPDAADERTGRGFAALLTVLCLFQIYLGALVAGLNAGLSYNTWPLMDGSLVPGDLFLQQPWWINLFENPKTVQFVHRLGAYTLFAATLWHMVSMARALPGTPHARRAVLFFVLISVQAGLGITTLLMHVDIHVALAHQGMALILLGFSVAHWRGFIGEYPAPVAVEVRD.

5 consecutive transmembrane segments (helical) span residues 23–43 (LLRIWLRVVLFTLFCLVLVGG), 109–129 (LLARTIGLVFALPLAFFWLTG), 137–157 (LPLVGLLALGGFQGFVGWWMV), 172–192 (LATHLTIACLIFAGCMWILRG), and 208–228 (GFAALLTVLCLFQIYLGALVA). Histidine 272 is a heme binding site. 3 consecutive transmembrane segments (helical) span residues 274–294 (LGAYTLFAATLWHMVSMARAL), 303–323 (AVLFFVLISVQAGLGITTLLM), and 327–347 (IHVALAHQGMALILLGFSVAH). Histidine 333 provides a ligand contact to heme.

The protein belongs to the COX15/CtaA family. Type 2 subfamily. As to quaternary structure, interacts with CtaB. The cofactor is heme b.

It localises to the cell membrane. The catalysed reaction is Fe(II)-heme o + 2 A + H2O = Fe(II)-heme a + 2 AH2. The protein operates within porphyrin-containing compound metabolism; heme A biosynthesis; heme A from heme O: step 1/1. In terms of biological role, catalyzes the conversion of heme O to heme A by two successive hydroxylations of the methyl group at C8. The first hydroxylation forms heme I, the second hydroxylation results in an unstable dihydroxymethyl group, which spontaneously dehydrates, resulting in the formyl group of heme A. The sequence is that of Heme A synthase from Agrobacterium fabrum (strain C58 / ATCC 33970) (Agrobacterium tumefaciens (strain C58)).